The chain runs to 270 residues: Bis(5'-nucleosyl)-tetraphosphatase, symmetrical (270 aa).

It belongs to the Ap4A hydrolase family.

The catalysed reaction is P(1),P(4)-bis(5'-adenosyl) tetraphosphate + H2O = 2 ADP + 2 H(+). Functionally, hydrolyzes diadenosine 5',5'''-P1,P4-tetraphosphate to yield ADP. This is Bis(5'-nucleosyl)-tetraphosphatase, symmetrical from Actinobacillus pleuropneumoniae serotype 5b (strain L20).